The sequence spans 545 residues: Glucose-6-phosphate isomerase (545 aa).

E351 (proton donor) is an active-site residue. Catalysis depends on residues H382 and K510.

The protein belongs to the GPI family.

It localises to the cytoplasm. The enzyme catalyses alpha-D-glucose 6-phosphate = beta-D-fructose 6-phosphate. Its pathway is carbohydrate biosynthesis; gluconeogenesis. It functions in the pathway carbohydrate degradation; glycolysis; D-glyceraldehyde 3-phosphate and glycerone phosphate from D-glucose: step 2/4. In terms of biological role, catalyzes the reversible isomerization of glucose-6-phosphate to fructose-6-phosphate. The chain is Glucose-6-phosphate isomerase from Helicobacter pylori (strain ATCC 700392 / 26695) (Campylobacter pylori).